Reading from the N-terminus, the 233-residue chain is Leucyl/phenylalanyl-tRNA--protein transferase (233 aa).

Belongs to the L/F-transferase family.

The protein resides in the cytoplasm. It carries out the reaction N-terminal L-lysyl-[protein] + L-leucyl-tRNA(Leu) = N-terminal L-leucyl-L-lysyl-[protein] + tRNA(Leu) + H(+). The catalysed reaction is N-terminal L-arginyl-[protein] + L-leucyl-tRNA(Leu) = N-terminal L-leucyl-L-arginyl-[protein] + tRNA(Leu) + H(+). It catalyses the reaction L-phenylalanyl-tRNA(Phe) + an N-terminal L-alpha-aminoacyl-[protein] = an N-terminal L-phenylalanyl-L-alpha-aminoacyl-[protein] + tRNA(Phe). In terms of biological role, functions in the N-end rule pathway of protein degradation where it conjugates Leu, Phe and, less efficiently, Met from aminoacyl-tRNAs to the N-termini of proteins containing an N-terminal arginine or lysine. This is Leucyl/phenylalanyl-tRNA--protein transferase from Chromobacterium violaceum (strain ATCC 12472 / DSM 30191 / JCM 1249 / CCUG 213 / NBRC 12614 / NCIMB 9131 / NCTC 9757 / MK).